Reading from the N-terminus, the 364-residue chain is tRNA 2-selenouridine synthase (364 aa).

The region spanning L14 to W137 is the Rhodanese domain. C97 acts as the S-selanylcysteine intermediate in catalysis.

This sequence belongs to the SelU family. As to quaternary structure, monomer.

The catalysed reaction is 5-methylaminomethyl-2-thiouridine(34) in tRNA + selenophosphate + (2E)-geranyl diphosphate + H2O + H(+) = 5-methylaminomethyl-2-selenouridine(34) in tRNA + (2E)-thiogeraniol + phosphate + diphosphate. It catalyses the reaction 5-methylaminomethyl-2-thiouridine(34) in tRNA + (2E)-geranyl diphosphate = 5-methylaminomethyl-S-(2E)-geranyl-thiouridine(34) in tRNA + diphosphate. It carries out the reaction 5-methylaminomethyl-S-(2E)-geranyl-thiouridine(34) in tRNA + selenophosphate + H(+) = 5-methylaminomethyl-2-(Se-phospho)selenouridine(34) in tRNA + (2E)-thiogeraniol. The enzyme catalyses 5-methylaminomethyl-2-(Se-phospho)selenouridine(34) in tRNA + H2O = 5-methylaminomethyl-2-selenouridine(34) in tRNA + phosphate. In terms of biological role, involved in the post-transcriptional modification of the uridine at the wobble position (U34) of tRNA(Lys), tRNA(Glu) and tRNA(Gln). Catalyzes the conversion of 2-thiouridine (S2U-RNA) to 2-selenouridine (Se2U-RNA). Acts in a two-step process involving geranylation of 2-thiouridine (S2U) to S-geranyl-2-thiouridine (geS2U) and subsequent selenation of the latter derivative to 2-selenouridine (Se2U) in the tRNA chain. The protein is tRNA 2-selenouridine synthase of Salmonella paratyphi A (strain ATCC 9150 / SARB42).